The sequence spans 444 residues: Biotin carboxylase 2 (444 aa).

The 444-residue stretch at 1–444 (MFTKVLIANR…VTTDFLKQHL (444 aa)) folds into the Biotin carboxylation domain. ATP contacts are provided by residues lysine 116, lysine 158, 164–165 (GG), 200–203 (EKVI), histidine 208, and histidine 235. The ATP-grasp domain occupies 120 to 317 (RKAMEAAGVP…LVEQQLRIAA (198 aa)). Lysine 237 contacts hydrogencarbonate. ATP contacts are provided by glutamate 275 and glutamate 288. Residues glutamate 275, glutamate 288, and asparagine 290 each contribute to the Mg(2+) site. Glutamate 275, glutamate 288, and asparagine 290 together coordinate Mn(2+). Arginine 292, valine 295, and arginine 338 together coordinate hydrogencarbonate. Arginine 292 is an active-site residue. Biotin is bound at residue arginine 338.

As to quaternary structure, acetyl-CoA carboxylase is a heterohexamer of biotin carboxyl carrier protein, biotin carboxylase and the two subunits of carboxyl transferase in a 2:2 complex. Requires Mg(2+) as cofactor. Mn(2+) serves as cofactor.

It carries out the reaction N(6)-biotinyl-L-lysyl-[protein] + hydrogencarbonate + ATP = N(6)-carboxybiotinyl-L-lysyl-[protein] + ADP + phosphate + H(+). The protein operates within lipid metabolism; malonyl-CoA biosynthesis; malonyl-CoA from acetyl-CoA: step 1/1. In terms of biological role, this protein is a component of the acetyl coenzyme A carboxylase complex; first, biotin carboxylase catalyzes the carboxylation of the carrier protein and then the transcarboxylase transfers the carboxyl group to form malonyl-CoA. The sequence is that of Biotin carboxylase 2 (accC2) from Bacillus subtilis (strain 168).